The primary structure comprises 148 residues: Flavodoxin (148 aa).

The Flavodoxin-like domain occupies 4 to 145; the sequence is ALIVYGSTTG…DIVGWAHDVR (142 aa).

The protein belongs to the flavodoxin family. The cofactor is FMN.

In terms of biological role, low-potential electron donor to a number of redox enzymes. The chain is Flavodoxin from Nitratidesulfovibrio vulgaris (strain ATCC 29579 / DSM 644 / CCUG 34227 / NCIMB 8303 / VKM B-1760 / Hildenborough) (Desulfovibrio vulgaris).